The chain runs to 361 residues: tRNA-specific 2-thiouridylase MnmA (361 aa).

Residues 8–15 and Met34 each bind ATP; that span reads AMSGGVDS. Cys104 (nucleophile) is an active-site residue. Cys104 and Cys202 are disulfide-bonded. Gly128 contacts ATP. The tract at residues 152 to 154 is interaction with tRNA; that stretch reads KDQ. The Cysteine persulfide intermediate role is filled by Cys202. The tract at residues 307-308 is interaction with tRNA; the sequence is RY.

This sequence belongs to the MnmA/TRMU family.

The protein resides in the cytoplasm. The catalysed reaction is S-sulfanyl-L-cysteinyl-[protein] + uridine(34) in tRNA + AH2 + ATP = 2-thiouridine(34) in tRNA + L-cysteinyl-[protein] + A + AMP + diphosphate + H(+). In terms of biological role, catalyzes the 2-thiolation of uridine at the wobble position (U34) of tRNA, leading to the formation of s(2)U34. The sequence is that of tRNA-specific 2-thiouridylase MnmA from Caldicellulosiruptor saccharolyticus (strain ATCC 43494 / DSM 8903 / Tp8T 6331).